Here is a 310-residue protein sequence, read N- to C-terminus: HTH-type transcriptional activator TtdR (310 aa).

The HTH lysR-type domain occupies 6–63 (PLAKDLQVLVEIVHSGSFSAAAATLGQTPAFVTKRIQILENTLATTLLNRSARGVALT). A DNA-binding region (H-T-H motif) is located at residues 23–42 (FSAAAATLGQTPAFVTKRIQ).

The protein belongs to the LysR transcriptional regulatory family.

In terms of biological role, positive regulator required for L-tartrate-dependent anaerobic growth on glycerol. Induces expression of the ttdA-ttdB-ygjE operon. This Escherichia coli O6:H1 (strain CFT073 / ATCC 700928 / UPEC) protein is HTH-type transcriptional activator TtdR (ttdR).